Here is a 191-residue protein sequence, read N- to C-terminus: dTTP/UTP pyrophosphatase (191 aa).

Asp65 (proton acceptor) is an active-site residue.

Belongs to the Maf family. YhdE subfamily. A divalent metal cation is required as a cofactor.

The protein localises to the cytoplasm. It catalyses the reaction dTTP + H2O = dTMP + diphosphate + H(+). The enzyme catalyses UTP + H2O = UMP + diphosphate + H(+). Its function is as follows. Nucleoside triphosphate pyrophosphatase that hydrolyzes dTTP and UTP. May have a dual role in cell division arrest and in preventing the incorporation of modified nucleotides into cellular nucleic acids. The sequence is that of dTTP/UTP pyrophosphatase from Leptospira biflexa serovar Patoc (strain Patoc 1 / Ames).